The following is a 264-amino-acid chain: Regulatory protein RecX (264 aa).

This sequence belongs to the RecX family.

It is found in the cytoplasm. Functionally, modulates RecA activity. In Lacticaseibacillus casei (strain BL23) (Lactobacillus casei), this protein is Regulatory protein RecX.